We begin with the raw amino-acid sequence, 541 residues long: Alpha-zingiberene synthase (541 aa).

Mg(2+)-binding residues include D296, D300, D437, T441, and E445. The short motif at 296 to 300 (DDIYD) is the DDXXD motif element.

It belongs to the terpene synthase family. Mg(2+) is required as a cofactor. The cofactor is Mn(2+).

The catalysed reaction is (2E,6E)-farnesyl diphosphate = alpha-zingiberene + diphosphate. It functions in the pathway secondary metabolite biosynthesis; terpenoid biosynthesis. Sesquiterpene synthase that catalyzes the formation of alpha-zingiberene and other sesquiterpenes from trans,trans-farnesyl diphosphate (FPP). May have an additional monoterpene synthase activity. The sequence is that of Alpha-zingiberene synthase (ZIS) from Ocimum basilicum (Sweet basil).